The sequence spans 404 residues: Glycosylated lysosomal membrane protein (404 aa).

Residues 1–26 form the signal peptide; it reads MSGYEKPSRGWGFCALSPVLLSLLMA. Residues 27–370 lie on the Lumenal side of the membrane; the sequence is APLGLLGEET…VDALSPLVLG (344 aa). Residues Asn63, Asn132, Asn157, Asn185, and Asn228 are each glycosylated (N-linked (GlcNAc...) asparagine). The chain crosses the membrane as a helical span at residues 371–391; it reads IMAVALGAPALMLLAGGLFLL. The Cytoplasmic segment spans residues 392–404; the sequence is LGRKRDSEYQSIN. Residues 400–404 carry the Lysosomal targeting motif motif; the sequence is YQSIN.

The protein belongs to the GLMP family. As to quaternary structure, interacts (via lumenal domain) with lysosomal protein MFSD1; the interaction starts while both proteins are still in the endoplasmic reticulum and is required for stabilization of MFSD1 in lysosomes but has no direct effect on its targeting to lysosomes or transporter activity. Post-translationally, highly N-glycosylated. N-glycosylation is essential for GLMP stability and for MFSD1 lysosomal localization.

The protein localises to the lysosome membrane. In terms of biological role, required to protect lysosomal transporter MFSD1 from lysosomal proteolysis and for MFSD1 lysosomal localization. The protein is Glycosylated lysosomal membrane protein of Bos taurus (Bovine).